Here is an 80-residue protein sequence, read N- to C-terminus: Exodeoxyribonuclease 7 small subunit (80 aa).

This sequence belongs to the XseB family. Heterooligomer composed of large and small subunits.

It localises to the cytoplasm. It carries out the reaction Exonucleolytic cleavage in either 5'- to 3'- or 3'- to 5'-direction to yield nucleoside 5'-phosphates.. Bidirectionally degrades single-stranded DNA into large acid-insoluble oligonucleotides, which are then degraded further into small acid-soluble oligonucleotides. In Pseudomonas putida (strain W619), this protein is Exodeoxyribonuclease 7 small subunit.